The primary structure comprises 247 residues: Golgi-associated RAB2 interactor protein 5A (247 aa).

Residues 1 to 16 (MGPPLWPDLQEPPPPG) show a composition bias toward pro residues. Disordered stretches follow at residues 1-22 (MGPP…SQIR) and 60-92 (GDIA…PTGR).

This sequence belongs to the GARIN family. As to quaternary structure, interacts (via N-terminus) with RAB2B (in GTP-bound form).

Its subcellular location is the golgi apparatus. Its function is as follows. RAB2B effector protein which promotes cytosolic DNA-induced innate immune responses. Regulates IFN responses against DNA viruses by regulating the CGAS-STING signaling axis. The protein is Golgi-associated RAB2 interactor protein 5A of Homo sapiens (Human).